Here is a 692-residue protein sequence, read N- to C-terminus: Threonine--tRNA ligase (692 aa).

Positions 1-20 are disordered; sequence MSAPAQPAPGVDGGDPSQAR. The TGS domain occupies 1-74; it reads MSAPAQPAPG…DVDTDITPVA (74 aa). The segment at 269 to 575 is catalytic; the sequence is DHRKLGVELD…LTEHYAGAFP (307 aa). Residues cysteine 374, histidine 425, and histidine 552 each coordinate Zn(2+).

This sequence belongs to the class-II aminoacyl-tRNA synthetase family. Homodimer. Requires Zn(2+) as cofactor.

It localises to the cytoplasm. The catalysed reaction is tRNA(Thr) + L-threonine + ATP = L-threonyl-tRNA(Thr) + AMP + diphosphate + H(+). Functionally, catalyzes the attachment of threonine to tRNA(Thr) in a two-step reaction: L-threonine is first activated by ATP to form Thr-AMP and then transferred to the acceptor end of tRNA(Thr). Also edits incorrectly charged L-seryl-tRNA(Thr). This chain is Threonine--tRNA ligase, found in Mycobacterium tuberculosis (strain CDC 1551 / Oshkosh).